Consider the following 336-residue polypeptide: Glycerol-3-phosphate dehydrogenase [NAD(P)+] (336 aa).

Residues Ser14, Trp15, Arg35, Arg36, and Lys109 each coordinate NADPH. Lys109 and Gly139 together coordinate sn-glycerol 3-phosphate. Residue Ala143 coordinates NADPH. The sn-glycerol 3-phosphate site is built by Lys194, Asp247, Ser257, Arg258, and Asn259. Lys194 functions as the Proton acceptor in the catalytic mechanism. Arg258 serves as a coordination point for NADPH. Glu284 is a binding site for NADPH.

It belongs to the NAD-dependent glycerol-3-phosphate dehydrogenase family.

The protein resides in the cytoplasm. The catalysed reaction is sn-glycerol 3-phosphate + NAD(+) = dihydroxyacetone phosphate + NADH + H(+). The enzyme catalyses sn-glycerol 3-phosphate + NADP(+) = dihydroxyacetone phosphate + NADPH + H(+). It participates in membrane lipid metabolism; glycerophospholipid metabolism. Catalyzes the reduction of the glycolytic intermediate dihydroxyacetone phosphate (DHAP) to sn-glycerol 3-phosphate (G3P), the key precursor for phospholipid synthesis. The chain is Glycerol-3-phosphate dehydrogenase [NAD(P)+] from Streptomyces avermitilis (strain ATCC 31267 / DSM 46492 / JCM 5070 / NBRC 14893 / NCIMB 12804 / NRRL 8165 / MA-4680).